The primary structure comprises 283 residues: Pantothenate synthetase (283 aa).

Methionine 31–histidine 38 contacts ATP. Histidine 38 acts as the Proton donor in catalysis. Glutamine 62 is a (R)-pantoate binding site. Glutamine 62 contributes to the beta-alanine binding site. Glycine 148–aspartate 151 contacts ATP. Residue glutamine 154 participates in (R)-pantoate binding. Residues valine 177 and lysine 185–arginine 188 contribute to the ATP site.

This sequence belongs to the pantothenate synthetase family. Homodimer.

Its subcellular location is the cytoplasm. It catalyses the reaction (R)-pantoate + beta-alanine + ATP = (R)-pantothenate + AMP + diphosphate + H(+). It functions in the pathway cofactor biosynthesis; (R)-pantothenate biosynthesis; (R)-pantothenate from (R)-pantoate and beta-alanine: step 1/1. Its function is as follows. Catalyzes the condensation of pantoate with beta-alanine in an ATP-dependent reaction via a pantoyl-adenylate intermediate. This chain is Pantothenate synthetase, found in Staphylococcus aureus (strain MSSA476).